Reading from the N-terminus, the 473-residue chain is Zinc finger and SCAN domain-containing protein 21 (473 aa).

Residue lysine 27 forms a Glycyl lysine isopeptide (Lys-Gly) (interchain with G-Cter in SUMO2) linkage. An SCAN box domain is found at 45 to 127 (RQRFRQFGYH…TLLEDLEREL (83 aa)). The tract at residues 127–171 (LDEPGHQVSTPPNEQKPVWEKISSSGTAKESPSSMQPQPLETSHN) is disordered. Polar residues predominate over residues 148 to 171 (ISSSGTAKESPSSMQPQPLETSHN). Residues lysine 221 and lysine 232 each participate in a glycyl lysine isopeptide (Lys-Gly) (interchain with G-Cter in SUMO2) cross-link. Residues 244 to 272 (LENEKGTKPPLQEAGSKKGRESVPTKPTP) are disordered. Basic and acidic residues predominate over residues 258–272 (GSKKGRESVPTKPTP). C2H2-type zinc fingers lie at residues 277–299 (YICA…RRTH), 305–327 (YVCT…YRTH), 333–354 (YDCK…QRMH), 360–382 (YQCK…YRIH), 388–410 (YQCN…QRLH), 416–438 (YKCK…HRIH), and 444–466 (YWCH…QRVH). Residue lysine 349 forms a Glycyl lysine isopeptide (Lys-Gly) (interchain with G-Cter in SUMO2) linkage.

Belongs to the krueppel C2H2-type zinc-finger protein family.

The protein resides in the nucleus. Its function is as follows. Strong transcriptional activator. Plays an important role in spermatogenesis; essential for the progression of meiotic prophase I in spermatocytes. The chain is Zinc finger and SCAN domain-containing protein 21 (ZSCAN21) from Gorilla gorilla gorilla (Western lowland gorilla).